The sequence spans 445 residues: Ribosomal protein uS12 methylthiotransferase RimO (445 aa).

An MTTase N-terminal domain is found at 6 to 121 (KKVAVVTLGC…ILETLEEAEK (116 aa)). Cys15, Cys50, Cys84, Cys159, Cys163, and Cys166 together coordinate [4Fe-4S] cluster. Residues 145–375 (LSPKQYAYVK…MELQHDIAYE (231 aa)) enclose the Radical SAM core domain. A TRAM domain is found at 378 to 445 (QRWVGQTLKV…SYDLMGEVVQ (68 aa)).

Belongs to the methylthiotransferase family. RimO subfamily. [4Fe-4S] cluster is required as a cofactor.

It localises to the cytoplasm. It carries out the reaction L-aspartate(89)-[ribosomal protein uS12]-hydrogen + (sulfur carrier)-SH + AH2 + 2 S-adenosyl-L-methionine = 3-methylsulfanyl-L-aspartate(89)-[ribosomal protein uS12]-hydrogen + (sulfur carrier)-H + 5'-deoxyadenosine + L-methionine + A + S-adenosyl-L-homocysteine + 2 H(+). Its function is as follows. Catalyzes the methylthiolation of an aspartic acid residue of ribosomal protein uS12. This Desulfitobacterium hafniense (strain Y51) protein is Ribosomal protein uS12 methylthiotransferase RimO.